Reading from the N-terminus, the 476-residue chain is Lactate utilization protein B 1 (476 aa).

2 4Fe-4S ferredoxin-type domains span residues 301-331 (GTEF…GHAY) and 350-379 (YDEY…LHDL). [4Fe-4S] cluster is bound by residues cysteine 310, cysteine 313, cysteine 316, cysteine 320, cysteine 363, cysteine 366, and cysteine 370.

The protein belongs to the LutB/YkgF family.

In terms of biological role, is involved in L-lactate degradation and allows cells to grow with lactate as the sole carbon source. Has probably a role as an electron transporter during oxidation of L-lactate. This chain is Lactate utilization protein B 1, found in Bacillus mycoides (strain KBAB4) (Bacillus weihenstephanensis).